We begin with the raw amino-acid sequence, 200 residues long: MPLTNVIYCGVCDFPAEYCEFSGKFKRCKAWLQENHPELYTKWYGDVTEDVSKQLAESSIGDEREEKLEKALEKLERKQQAREERELAKKLSSKVVIRREARTKRKCMIAISGLEVFEIDMKKLSKTFASKFATGCSISKNAEKKEEVIVQGDLADEVEAYIHSLLEEKGMKEVKVEVIDAAKKKKKAETTTTPGSENKK.

Residues 95 to 166 form the SUI1 domain; the sequence is VVIRREARTK…EVEAYIHSLL (72 aa).

It belongs to the DENR family. Interacts with the 40S ribosomal subunit.

Its subcellular location is the cytoplasm. This is Translation machinery-associated protein 22 (TMA22) from Kluyveromyces lactis (strain ATCC 8585 / CBS 2359 / DSM 70799 / NBRC 1267 / NRRL Y-1140 / WM37) (Yeast).